The chain runs to 192 residues: MVVGLLGGSFDPPHPGHVHITREALKRFGLDRVWWLVSPGNPLKPRPPAPLARRLAEARRLMRHPRVAVTGLEAEIGTRFTAETLAVLQRRYPGVRFVWLMGADNLAQFHRWERWRAIMESVPVGVLARPGAGLRARTSPAARRYASALLPEAEAARLGRSAAPAWCFVNLPMMDLSSTEIRATGRWRGQAD.

Belongs to the NadD family.

It carries out the reaction nicotinate beta-D-ribonucleotide + ATP + H(+) = deamido-NAD(+) + diphosphate. The protein operates within cofactor biosynthesis; NAD(+) biosynthesis; deamido-NAD(+) from nicotinate D-ribonucleotide: step 1/1. In terms of biological role, catalyzes the reversible adenylation of nicotinate mononucleotide (NaMN) to nicotinic acid adenine dinucleotide (NaAD). The chain is Probable nicotinate-nucleotide adenylyltransferase from Cereibacter sphaeroides (strain ATCC 17029 / ATH 2.4.9) (Rhodobacter sphaeroides).